The chain runs to 407 residues: Arrestin domain-containing protein 2 (407 aa).

This sequence belongs to the arrestin family. Interacts with WWP1 (via WW domains).

The chain is Arrestin domain-containing protein 2 (ARRDC2) from Homo sapiens (Human).